A 285-amino-acid polypeptide reads, in one-letter code: 2-dehydro-3-deoxyphosphooctonate aldolase (285 aa).

It belongs to the KdsA family.

The protein localises to the cytoplasm. The enzyme catalyses D-arabinose 5-phosphate + phosphoenolpyruvate + H2O = 3-deoxy-alpha-D-manno-2-octulosonate-8-phosphate + phosphate. It functions in the pathway carbohydrate biosynthesis; 3-deoxy-D-manno-octulosonate biosynthesis; 3-deoxy-D-manno-octulosonate from D-ribulose 5-phosphate: step 2/3. The protein operates within bacterial outer membrane biogenesis; lipopolysaccharide biosynthesis. The polypeptide is 2-dehydro-3-deoxyphosphooctonate aldolase (Methylibium petroleiphilum (strain ATCC BAA-1232 / LMG 22953 / PM1)).